Consider the following 263-residue polypeptide: Malonyl-[acyl-carrier protein] O-methyltransferase (263 aa).

The protein belongs to the methyltransferase superfamily.

It catalyses the reaction malonyl-[ACP] + S-adenosyl-L-methionine = malonyl-[ACP] methyl ester + S-adenosyl-L-homocysteine. The protein operates within cofactor biosynthesis; biotin biosynthesis. Functionally, converts the free carboxyl group of a malonyl-thioester to its methyl ester by transfer of a methyl group from S-adenosyl-L-methionine (SAM). It allows to synthesize pimeloyl-ACP via the fatty acid synthetic pathway. This chain is Malonyl-[acyl-carrier protein] O-methyltransferase, found in Chlorobium luteolum (strain DSM 273 / BCRC 81028 / 2530) (Pelodictyon luteolum).